A 94-amino-acid chain; its full sequence is ESAT-6-like protein EsxN (94 aa).

Belongs to the WXG100 family. ESAT-6 subfamily.

Its subcellular location is the secreted. This is ESAT-6-like protein EsxN from Mycobacterium bovis (strain ATCC BAA-935 / AF2122/97).